A 232-amino-acid polypeptide reads, in one-letter code: Large ribosomal subunit protein uL1 (232 aa).

It belongs to the universal ribosomal protein uL1 family. As to quaternary structure, part of the 50S ribosomal subunit.

Its function is as follows. Binds directly to 23S rRNA. The L1 stalk is quite mobile in the ribosome, and is involved in E site tRNA release. Protein L1 is also a translational repressor protein, it controls the translation of the L11 operon by binding to its mRNA. The polypeptide is Large ribosomal subunit protein uL1 (Bartonella bacilliformis (strain ATCC 35685 / KC583 / Herrer 020/F12,63)).